We begin with the raw amino-acid sequence, 413 residues long: Gamma-glutamyl phosphate reductase (413 aa).

This sequence belongs to the gamma-glutamyl phosphate reductase family.

Its subcellular location is the cytoplasm. The enzyme catalyses L-glutamate 5-semialdehyde + phosphate + NADP(+) = L-glutamyl 5-phosphate + NADPH + H(+). It participates in amino-acid biosynthesis; L-proline biosynthesis; L-glutamate 5-semialdehyde from L-glutamate: step 2/2. Its function is as follows. Catalyzes the NADPH-dependent reduction of L-glutamate 5-phosphate into L-glutamate 5-semialdehyde and phosphate. The product spontaneously undergoes cyclization to form 1-pyrroline-5-carboxylate. This chain is Gamma-glutamyl phosphate reductase, found in Lactococcus lactis subsp. cremoris (strain MG1363).